A 1454-amino-acid chain; its full sequence is Receptor-type tyrosine-protein phosphatase T (1454 aa).

The N-terminal stretch at 1–29 is a signal peptide; it reads MGSLGGLALCLLRLLLLGLQRPPLPGAGA. At 30 to 770 the chain is on the extracellular side; the sequence is QSAAGGCSFD…EKQVDNTVKM (741 aa). Residues 34–195 enclose the MAM domain; the sequence is GGCSFDEHYS…VRVLAHPCRK (162 aa). Asn-82, Asn-102, Asn-141, and Asn-212 each carry an N-linked (GlcNAc...) asparagine glycan. Residues 197–288 form the Ig-like C2-type domain; sequence PHFLRLQNVE…SGVSNYAELI (92 aa). Cys-217 and Cys-271 are oxidised to a cystine. Fibronectin type-III domains follow at residues 295-388, 393-487, and 488-594; these read PIAP…TKCA, GPQN…TEED, and VPGA…SAPS. 6 N-linked (GlcNAc...) asparagine glycosylation sites follow: Asn-425, Asn-514, Asn-551, Asn-605, Asn-658, and Asn-688. The 98-residue stretch at 670-767 folds into the Fibronectin type-III 4 domain; sequence AELKPSNLPV…VEPEKQVDNT (98 aa). A helical transmembrane segment spans residues 771–791; sequence AGVIAGLLMFIIILLGVMLTI. The Cytoplasmic segment spans residues 792 to 1454; sequence KRRKLAKKQK…EVALEYLSSF (663 aa). The tract at residues 800–852 is disordered; sequence QKETQSGAQREMGPVASTDKPTAKLGTNRNDEGFSSSSQDVNGFTDGSRGELS. The span at 824-841 shows a compositional bias: polar residues; sequence LGTNRNDEGFSSSSQDVN. Tyrosine-protein phosphatase domains are found at residues 902 to 1156 and 1188 to 1450; these read FKEE…ILEA and IKDE…ALEY. Substrate-binding positions include Asp-1065, 1097-1103, and Gln-1141; that span reads CSAGAGR. The Phosphocysteine intermediate role is filled by Cys-1097. Ser-1221 carries the post-translational modification Phosphoserine. Cys-1391 acts as the Phosphocysteine intermediate in catalysis.

This sequence belongs to the protein-tyrosine phosphatase family. Receptor class 2B subfamily. Expression is restricted to the CNS. Distributed throughout the brain and spinal cord.

The protein localises to the membrane. The catalysed reaction is O-phospho-L-tyrosyl-[protein] + H2O = L-tyrosyl-[protein] + phosphate. In terms of biological role, may be involved in both signal transduction and cellular adhesion in the CNS. May have specific signaling roles in the tyrosine phosphorylation/dephosphorylation pathway in the anterior compartment of the adult cerebellar cortex. The protein is Receptor-type tyrosine-protein phosphatase T (Ptprt) of Mus musculus (Mouse).